We begin with the raw amino-acid sequence, 144 residues long: Large ribosomal subunit protein uL11 (144 aa).

This sequence belongs to the universal ribosomal protein uL11 family. As to quaternary structure, part of the ribosomal stalk of the 50S ribosomal subunit. Interacts with L10 and the large rRNA to form the base of the stalk. L10 forms an elongated spine to which L12 dimers bind in a sequential fashion forming a multimeric L10(L12)X complex. In terms of processing, one or more lysine residues are methylated.

Its function is as follows. Forms part of the ribosomal stalk which helps the ribosome interact with GTP-bound translation factors. This chain is Large ribosomal subunit protein uL11, found in Streptomyces sp. (strain FRI-5).